The chain runs to 618 residues: 1-deoxy-D-xylulose-5-phosphate synthase (618 aa).

Thiamine diphosphate contacts are provided by residues His70 and 111 to 113 (GHS). Asp142 contacts Mg(2+). Thiamine diphosphate is bound by residues 143–144 (GS), Asn171, Tyr278, and Glu360. Asn171 contributes to the Mg(2+) binding site.

This sequence belongs to the transketolase family. DXPS subfamily. In terms of assembly, homodimer. Requires Mg(2+) as cofactor. It depends on thiamine diphosphate as a cofactor.

The enzyme catalyses D-glyceraldehyde 3-phosphate + pyruvate + H(+) = 1-deoxy-D-xylulose 5-phosphate + CO2. It functions in the pathway metabolic intermediate biosynthesis; 1-deoxy-D-xylulose 5-phosphate biosynthesis; 1-deoxy-D-xylulose 5-phosphate from D-glyceraldehyde 3-phosphate and pyruvate: step 1/1. Catalyzes the acyloin condensation reaction between C atoms 2 and 3 of pyruvate and glyceraldehyde 3-phosphate to yield 1-deoxy-D-xylulose-5-phosphate (DXP). The polypeptide is 1-deoxy-D-xylulose-5-phosphate synthase (Helicobacter pylori (strain G27)).